The chain runs to 249 residues: tRNA pseudouridine synthase A (249 aa).

The Nucleophile role is filled by Asp52. Residue Tyr111 participates in substrate binding.

This sequence belongs to the tRNA pseudouridine synthase TruA family. As to quaternary structure, homodimer.

The enzyme catalyses uridine(38/39/40) in tRNA = pseudouridine(38/39/40) in tRNA. In terms of biological role, formation of pseudouridine at positions 38, 39 and 40 in the anticodon stem and loop of transfer RNAs. This Maricaulis maris (strain MCS10) (Caulobacter maris) protein is tRNA pseudouridine synthase A.